A 257-amino-acid polypeptide reads, in one-letter code: 5'-nucleotidase SurE (257 aa).

The a divalent metal cation site is built by Asp-11, Asp-12, Ser-42, and Asn-99.

Belongs to the SurE nucleotidase family. Requires a divalent metal cation as cofactor.

Its subcellular location is the cytoplasm. The enzyme catalyses a ribonucleoside 5'-phosphate + H2O = a ribonucleoside + phosphate. Nucleotidase that shows phosphatase activity on nucleoside 5'-monophosphates. This Flavobacterium psychrophilum (strain ATCC 49511 / DSM 21280 / CIP 103535 / JIP02/86) protein is 5'-nucleotidase SurE.